The chain runs to 284 residues: MLIIETLPLLRQHIRRLRQEGKRIALVPTMGNLHDGHMKLVDEARARADVVVVSIFVNPMQFDRADDLARYPRTLQEDCEKLKKRHVDFVFSPVPSDIYPQGTEGATYVDVPGISTMLEGASRPGHFRGVSTIVSKLFNLVQPDIACFGEKDFQQLALIRKMVADMGYDIEIVGVPIVRAKDGLALSSRNGYLTADQRKIAPGLCKVMNAMAEQLKAKELTTEEIVALAEQELNDKGLRADDIQIRDADTLLELSATSKRAVILVAAWLGQARLIDNKVVELAE.

30 to 37 (MGNLHDGH) is a binding site for ATP. The Proton donor role is filled by His-37. A (R)-pantoate-binding site is contributed by Gln-61. A beta-alanine-binding site is contributed by Gln-61. An ATP-binding site is contributed by 149–152 (GEKD). Position 155 (Gln-155) interacts with (R)-pantoate. Residues Val-178 and 186–189 (LSSR) each bind ATP.

Belongs to the pantothenate synthetase family. As to quaternary structure, homodimer.

Its subcellular location is the cytoplasm. The catalysed reaction is (R)-pantoate + beta-alanine + ATP = (R)-pantothenate + AMP + diphosphate + H(+). It participates in cofactor biosynthesis; (R)-pantothenate biosynthesis; (R)-pantothenate from (R)-pantoate and beta-alanine: step 1/1. Functionally, catalyzes the condensation of pantoate with beta-alanine in an ATP-dependent reaction via a pantoyl-adenylate intermediate. The polypeptide is Pantothenate synthetase (Enterobacter sp. (strain 638)).